Reading from the N-terminus, the 425-residue chain is Tyrosine--tRNA ligase (425 aa).

Tyr-34 is an L-tyrosine binding site. Positions 39–48 (PTADSLHVGN) match the 'HIGH' region motif. L-tyrosine contacts are provided by Tyr-171 and Gln-175. The short motif at 231 to 235 (KYGKS) is the 'KMSKS' region element. Lys-234 is a binding site for ATP. In terms of domain architecture, S4 RNA-binding spans 358–424 (APLVELLVHA…GKRTYTVVKI (67 aa)).

This sequence belongs to the class-I aminoacyl-tRNA synthetase family. TyrS type 1 subfamily. In terms of assembly, homodimer.

Its subcellular location is the cytoplasm. It carries out the reaction tRNA(Tyr) + L-tyrosine + ATP = L-tyrosyl-tRNA(Tyr) + AMP + diphosphate + H(+). In terms of biological role, catalyzes the attachment of tyrosine to tRNA(Tyr) in a two-step reaction: tyrosine is first activated by ATP to form Tyr-AMP and then transferred to the acceptor end of tRNA(Tyr). The protein is Tyrosine--tRNA ligase of Opitutus terrae (strain DSM 11246 / JCM 15787 / PB90-1).